The primary structure comprises 176 residues: Peptidyl-tRNA hydrolase (176 aa).

A tRNA-binding site is contributed by Y14. H19 functions as the Proton acceptor in the catalytic mechanism. 3 residues coordinate tRNA: Y65, N67, and N113.

This sequence belongs to the PTH family. As to quaternary structure, monomer.

Its subcellular location is the cytoplasm. The catalysed reaction is an N-acyl-L-alpha-aminoacyl-tRNA + H2O = an N-acyl-L-amino acid + a tRNA + H(+). Functionally, hydrolyzes ribosome-free peptidyl-tRNAs (with 1 or more amino acids incorporated), which drop off the ribosome during protein synthesis, or as a result of ribosome stalling. Its function is as follows. Catalyzes the release of premature peptidyl moieties from peptidyl-tRNA molecules trapped in stalled 50S ribosomal subunits, and thus maintains levels of free tRNAs and 50S ribosomes. This Phytoplasma mali (strain AT) protein is Peptidyl-tRNA hydrolase.